A 305-amino-acid polypeptide reads, in one-letter code: Homoserine kinase (305 aa).

93–103 is an ATP binding site; sequence PLARGLGSSAT.

The protein belongs to the GHMP kinase family. Homoserine kinase subfamily.

The protein resides in the cytoplasm. The catalysed reaction is L-homoserine + ATP = O-phospho-L-homoserine + ADP + H(+). It participates in amino-acid biosynthesis; L-threonine biosynthesis; L-threonine from L-aspartate: step 4/5. Functionally, catalyzes the ATP-dependent phosphorylation of L-homoserine to L-homoserine phosphate. The sequence is that of Homoserine kinase from Trichodesmium erythraeum (strain IMS101).